Consider the following 444-residue polypeptide: Methylenetetrahydrofolate--tRNA-(uracil-5-)-methyltransferase TrmFO (444 aa).

10-15 (GAGLAG) lines the FAD pocket.

Belongs to the MnmG family. TrmFO subfamily. The cofactor is FAD.

Its subcellular location is the cytoplasm. The enzyme catalyses uridine(54) in tRNA + (6R)-5,10-methylene-5,6,7,8-tetrahydrofolate + NADH + H(+) = 5-methyluridine(54) in tRNA + (6S)-5,6,7,8-tetrahydrofolate + NAD(+). It catalyses the reaction uridine(54) in tRNA + (6R)-5,10-methylene-5,6,7,8-tetrahydrofolate + NADPH + H(+) = 5-methyluridine(54) in tRNA + (6S)-5,6,7,8-tetrahydrofolate + NADP(+). In terms of biological role, catalyzes the folate-dependent formation of 5-methyl-uridine at position 54 (M-5-U54) in all tRNAs. The polypeptide is Methylenetetrahydrofolate--tRNA-(uracil-5-)-methyltransferase TrmFO (Streptococcus mutans serotype c (strain ATCC 700610 / UA159)).